We begin with the raw amino-acid sequence, 296 residues long: Acetylglutamate kinase (296 aa).

Residues 66 to 67 (GG), R88, and N191 each bind substrate.

This sequence belongs to the acetylglutamate kinase family. ArgB subfamily.

The protein resides in the cytoplasm. It catalyses the reaction N-acetyl-L-glutamate + ATP = N-acetyl-L-glutamyl 5-phosphate + ADP. Its pathway is amino-acid biosynthesis; L-arginine biosynthesis; N(2)-acetyl-L-ornithine from L-glutamate: step 2/4. Functionally, catalyzes the ATP-dependent phosphorylation of N-acetyl-L-glutamate. The sequence is that of Acetylglutamate kinase from Lawsonia intracellularis (strain PHE/MN1-00).